The primary structure comprises 165 residues: Protein SprT (165 aa).

Residues E20–V163 enclose the SprT-like domain. Residue H78 participates in Zn(2+) binding. E79 is a catalytic residue. H82 contributes to the Zn(2+) binding site.

It belongs to the SprT family. It depends on Zn(2+) as a cofactor.

The protein localises to the cytoplasm. This Salmonella arizonae (strain ATCC BAA-731 / CDC346-86 / RSK2980) protein is Protein SprT.